The following is a 644-amino-acid chain: DNA mismatch repair protein MutL (644 aa).

The segment at 363 to 405 (GTFNPFTDDKTNQHYTKAGSGSGSGYSSGSSSSSGSGSGSSYS) is disordered. Low complexity predominate over residues 389 to 405 (SSGSSSSSGSGSGSSYS).

This sequence belongs to the DNA mismatch repair MutL/HexB family.

In terms of biological role, this protein is involved in the repair of mismatches in DNA. It is required for dam-dependent methyl-directed DNA mismatch repair. May act as a 'molecular matchmaker', a protein that promotes the formation of a stable complex between two or more DNA-binding proteins in an ATP-dependent manner without itself being part of a final effector complex. This Flavobacterium johnsoniae (strain ATCC 17061 / DSM 2064 / JCM 8514 / BCRC 14874 / CCUG 350202 / NBRC 14942 / NCIMB 11054 / UW101) (Cytophaga johnsonae) protein is DNA mismatch repair protein MutL.